The primary structure comprises 421 residues: NAD-specific glutamate dehydrogenase (421 aa).

2 residues coordinate substrate: K71 and K95. The Proton donor role is filled by K107. Residues T191 and N222 each contribute to the NAD(+) site. S355 lines the substrate pocket.

It belongs to the Glu/Leu/Phe/Val dehydrogenases family. As to quaternary structure, homohexamer.

It catalyses the reaction L-glutamate + NAD(+) + H2O = 2-oxoglutarate + NH4(+) + NADH + H(+). The polypeptide is NAD-specific glutamate dehydrogenase (gluD) (Clostridioides difficile (Peptoclostridium difficile)).